Reading from the N-terminus, the 530-residue chain is MPSIKRALISLSDKTGAVEFAQTLHKLGVEILSTGGTAKLLADAGVPVIEVADYTGFPEMLDGRVKTLHPKIHGGILGRRDLPEHVAKMEEHGIGNIDLVCVNLYPFAATIAKPNCTLEDAIENIDIGGPTMVRSAAKNWKHVAIVTDPADFPAIAAEMEANNGALSDKTRFNLSRKAFSHTAQYDGMISNYLTSLSDDVLSGTPEIGEFPSQFNQSWIKVQDMRYGENPHQRAAFYRDVYPAAGSLSAYKQLQGKELSYNNIADADAAWEAVKSFDAPACVIVKHANPCGVAVAADTLTAYKLAYATDTTSAFGGIIAFNREVDGETVKQITDNQFMEVLMAPKFTAEALEIAAAKKNVRVLQISLTTPLEAGANRFELKRVGGGLLVQTPDIYRLNRADLKVVSKRQLTEQEWNDLMFVWNVAKYVKSNAIVFGKGGQTYGIGAGQMSRVDSTRIAARKAQDANLDLNGACAASDAFFPFRDGVDVIAEQGIKAIIHPAGSMRDQEVFDAADEHGIAMVVTGVRHFRH.

Residues 1–147 (MPSIKRALIS…KNWKHVAIVT (147 aa)) enclose the MGS-like domain.

It belongs to the PurH family.

The enzyme catalyses (6R)-10-formyltetrahydrofolate + 5-amino-1-(5-phospho-beta-D-ribosyl)imidazole-4-carboxamide = 5-formamido-1-(5-phospho-D-ribosyl)imidazole-4-carboxamide + (6S)-5,6,7,8-tetrahydrofolate. It catalyses the reaction IMP + H2O = 5-formamido-1-(5-phospho-D-ribosyl)imidazole-4-carboxamide. It participates in purine metabolism; IMP biosynthesis via de novo pathway; 5-formamido-1-(5-phospho-D-ribosyl)imidazole-4-carboxamide from 5-amino-1-(5-phospho-D-ribosyl)imidazole-4-carboxamide (10-formyl THF route): step 1/1. The protein operates within purine metabolism; IMP biosynthesis via de novo pathway; IMP from 5-formamido-1-(5-phospho-D-ribosyl)imidazole-4-carboxamide: step 1/1. This Neisseria meningitidis serogroup A / serotype 4A (strain DSM 15465 / Z2491) protein is Bifunctional purine biosynthesis protein PurH.